Consider the following 561-residue polypeptide: DNA ligase B (561 aa).

Lysine 125 serves as the catalytic N6-AMP-lysine intermediate.

Belongs to the NAD-dependent DNA ligase family. LigB subfamily.

The catalysed reaction is NAD(+) + (deoxyribonucleotide)n-3'-hydroxyl + 5'-phospho-(deoxyribonucleotide)m = (deoxyribonucleotide)n+m + AMP + beta-nicotinamide D-nucleotide.. In terms of biological role, catalyzes the formation of phosphodiester linkages between 5'-phosphoryl and 3'-hydroxyl groups in double-stranded DNA using NAD as a coenzyme and as the energy source for the reaction. In Salmonella dublin (strain CT_02021853), this protein is DNA ligase B.